Here is a 600-residue protein sequence, read N- to C-terminus: Aspartate--tRNA(Asp/Asn) ligase (600 aa).

An L-aspartate-binding site is contributed by E174. The aspartate stretch occupies residues 198 to 201 (QLFK). Residue R220 coordinates L-aspartate. Residues 220 to 222 (RDE) and Q229 contribute to the ATP site. H457 is an L-aspartate binding site. Residue E491 participates in ATP binding. R498 provides a ligand contact to L-aspartate. 543 to 546 (GLDR) lines the ATP pocket.

The protein belongs to the class-II aminoacyl-tRNA synthetase family. Type 1 subfamily. Homodimer.

It localises to the cytoplasm. The enzyme catalyses tRNA(Asx) + L-aspartate + ATP = L-aspartyl-tRNA(Asx) + AMP + diphosphate. Its function is as follows. Aspartyl-tRNA synthetase with relaxed tRNA specificity since it is able to aspartylate not only its cognate tRNA(Asp) but also tRNA(Asn). Reaction proceeds in two steps: L-aspartate is first activated by ATP to form Asp-AMP and then transferred to the acceptor end of tRNA(Asp/Asn). In Burkholderia lata (strain ATCC 17760 / DSM 23089 / LMG 22485 / NCIMB 9086 / R18194 / 383), this protein is Aspartate--tRNA(Asp/Asn) ligase.